The primary structure comprises 327 residues: GTPase Obg (327 aa).

Positions 1–159 constitute an Obg domain; the sequence is MKFVDSARIV…LKVDLELKLM (159 aa). The tract at residues 120–145 is disordered; sequence GGDGGRGNPHFTTSTRQAPRYAEPGG. Residues 160-323 form the OBG-type G domain; that stretch reads ADVGLVGFPN…LRNALWNTIN (164 aa). GTP-binding positions include 166-173, 191-195, 213-216, 280-283, and 304-306; these read GFPNAGKS, FTTLV, DIPG, TKMD, and SSI. Residues S173 and T193 each coordinate Mg(2+).

This sequence belongs to the TRAFAC class OBG-HflX-like GTPase superfamily. OBG GTPase family. As to quaternary structure, monomer. Requires Mg(2+) as cofactor.

The protein localises to the cytoplasm. In terms of biological role, an essential GTPase which binds GTP, GDP and possibly (p)ppGpp with moderate affinity, with high nucleotide exchange rates and a fairly low GTP hydrolysis rate. Plays a role in control of the cell cycle, stress response, ribosome biogenesis and in those bacteria that undergo differentiation, in morphogenesis control. In Prosthecochloris aestuarii (strain DSM 271 / SK 413), this protein is GTPase Obg.